The sequence spans 143 residues: Transmembrane protein 207 (143 aa).

An N-terminal signal peptide occupies residues 1-29 (MSTSSPFRVASKIVTAGCLCLPLFQRVLS). A helical transmembrane segment spans residues 52-72 (IWFFLLIFLVVLLCGVVLFCL).

In terms of assembly, interacts with WWOX.

The protein localises to the membrane. The protein is Transmembrane protein 207 of Mus musculus (Mouse).